Here is a 587-residue protein sequence, read N- to C-terminus: Arginine--tRNA ligase (587 aa).

The short motif at 126–136 is the 'HIGH' region element; the sequence is ANPTGPLHVGH.

Belongs to the class-I aminoacyl-tRNA synthetase family. As to quaternary structure, monomer.

It is found in the cytoplasm. The enzyme catalyses tRNA(Arg) + L-arginine + ATP = L-arginyl-tRNA(Arg) + AMP + diphosphate. This Aromatoleum aromaticum (strain DSM 19018 / LMG 30748 / EbN1) (Azoarcus sp. (strain EbN1)) protein is Arginine--tRNA ligase.